A 372-amino-acid polypeptide reads, in one-letter code: SAM domain-containing protein SAMSN-1 (372 aa).

A disordered region spans residues M1–R71. Positions R20 to G25 match the Important for interaction with 14-3-3 proteins motif. Phosphoserine occurs at positions 23 and 34. Positions K37–L49 are enriched in basic and acidic residues. Over residues G52 to G63 the composition is skewed to low complexity. S74 carries the post-translational modification Phosphoserine. T76 bears the Phosphothreonine mark. Phosphoserine occurs at positions 90, 97, and 119. The interval S90 to I111 is disordered. Low complexity predominate over residues L129–T146. A disordered region spans residues L129–R153. Y160 is modified (phosphotyrosine). Residues P163 to E224 form the SH3 domain. Residues E241–E305 form the SAM domain. Residues D304–D372 are disordered. The span at P317–Q329 shows a compositional bias: polar residues.

Interacts with FASLG. Interacts with phosphotyrosine containing proteins. Interacts (via SH3 domain) with CTTN. Interacts (phosphorylated at Ser-23) with YWHAB, YWHAE, YWHAG, YWHAH, YWHAZ and SFN. Interacts directly with SAP30 and HDAC1. Identified in a complex with SAP30 and HDAC1. Detected in spleen and lymph node (at protein level).

It localises to the nucleus. The protein resides in the cytoplasm. It is found in the cell projection. The protein localises to the ruffle. Negative regulator of B-cell activation. Down-regulates cell proliferation (in vitro). Promotes RAC1-dependent membrane ruffle formation and reorganization of the actin cytoskeleton. Regulates cell spreading and cell polarization. Stimulates HDAC1 activity. Regulates LYN activity by modulating its tyrosine phosphorylation. This chain is SAM domain-containing protein SAMSN-1 (Samsn1), found in Mus musculus (Mouse).